Consider the following 505-residue polypeptide: ATP synthase subunit beta, mitochondrial (505 aa).

A mitochondrion-targeting transit peptide spans 1–31 (MFALRAASKADKNLLPFLGQLSRSHAAKAAK). 183–190 (GGAGVGKT) contacts ATP.

It belongs to the ATPase alpha/beta chains family. F-type ATPases have 2 components, CF(1) - the catalytic core - and CF(0) - the membrane proton channel. CF(1) has five subunits: alpha(3), beta(3), gamma(1), delta(1), epsilon(1). CF(0) has three main subunits: a, b and c.

It localises to the mitochondrion. Its subcellular location is the mitochondrion inner membrane. It carries out the reaction ATP + H2O + 4 H(+)(in) = ADP + phosphate + 5 H(+)(out). Its function is as follows. Mitochondrial membrane ATP synthase (F(1)F(0) ATP synthase or Complex V) produces ATP from ADP in the presence of a proton gradient across the membrane which is generated by electron transport complexes of the respiratory chain. F-type ATPases consist of two structural domains, F(1) - containing the extramembraneous catalytic core, and F(0) - containing the membrane proton channel, linked together by a central stalk and a peripheral stalk. During catalysis, ATP synthesis in the catalytic domain of F(1) is coupled via a rotary mechanism of the central stalk subunits to proton translocation. Subunits alpha and beta form the catalytic core in F(1). Rotation of the central stalk against the surrounding alpha(3)beta(3) subunits leads to hydrolysis of ATP in three separate catalytic sites on the beta subunits. The chain is ATP synthase subunit beta, mitochondrial from Drosophila melanogaster (Fruit fly).